The following is a 441-amino-acid chain: EP1-like glycoprotein 3 (441 aa).

The N-terminal stretch at M1–A22 is a signal peptide. The 131-residue stretch at Q29–D159 folds into the Bulb-type lectin domain. N-linked (GlcNAc...) asparagine glycosylation is found at N102, N258, and N269. One copy of the WD repeat lies at G254–A296. In terms of domain architecture, PAN spans C356–P433. 2 disulfide bridges follow: C387–C409 and C391–C397.

Post-translationally, phosphorylated on tyrosine.

It localises to the secreted. The protein resides in the cell wall. May be involved in a cell-to cell programmed cell death (PCD) signaling mechanism. The sequence is that of EP1-like glycoprotein 3 from Arabidopsis thaliana (Mouse-ear cress).